The sequence spans 335 residues: tRNA N6-adenosine threonylcarbamoyltransferase (335 aa).

Residues H107 and H111 each contribute to the Fe cation site. Substrate-binding positions include 129 to 133 (LVSGG), D162, G175, and N268. D296 serves as a coordination point for Fe cation.

It belongs to the KAE1 / TsaD family. Fe(2+) is required as a cofactor.

The protein resides in the cytoplasm. The catalysed reaction is L-threonylcarbamoyladenylate + adenosine(37) in tRNA = N(6)-L-threonylcarbamoyladenosine(37) in tRNA + AMP + H(+). Functionally, required for the formation of a threonylcarbamoyl group on adenosine at position 37 (t(6)A37) in tRNAs that read codons beginning with adenine. Is involved in the transfer of the threonylcarbamoyl moiety of threonylcarbamoyl-AMP (TC-AMP) to the N6 group of A37, together with TsaE and TsaB. TsaD likely plays a direct catalytic role in this reaction. In Campylobacter fetus subsp. fetus (strain 82-40), this protein is tRNA N6-adenosine threonylcarbamoyltransferase.